Reading from the N-terminus, the 121-residue chain is Glycine cleavage system H protein (121 aa).

Residues 22-102 (IAWVGITKYA…DSSVWLFKAE (81 aa)) form the Lipoyl-binding domain. The residue at position 63 (Lys-63) is an N6-lipoyllysine.

It belongs to the GcvH family. In terms of assembly, the glycine cleavage system is composed of four proteins: P, T, L and H. It depends on (R)-lipoate as a cofactor.

Its function is as follows. The glycine cleavage system catalyzes the degradation of glycine. The H protein shuttles the methylamine group of glycine from the P protein to the T protein. This Tropheryma whipplei (strain TW08/27) (Whipple's bacillus) protein is Glycine cleavage system H protein.